A 174-amino-acid polypeptide reads, in one-letter code: Flavodoxin (174 aa).

The Flavodoxin-like domain maps to 4-165 (VGLFYGSDTG…RVEKWCKQIY (162 aa)).

The protein belongs to the flavodoxin family. FMN serves as cofactor.

Functionally, low-potential electron donor to a number of redox enzymes. The protein is Flavodoxin (fldA) of Haemophilus influenzae (strain ATCC 51907 / DSM 11121 / KW20 / Rd).